The chain runs to 228 residues: MRSRRVDVMDVMNRLILAMDLMNRDDALRVTGEVREYIDTVKIGYPLVLSEGMDIIAEFRKRFGCRIIADFKVADIPETNEKICRATFKAGADAIIVHGFRGADSVRACLNVAEEMGREVFLLTEMSHPGAEMFIQGAADEIARMGVDLGVKNYVGPSTRPERLSRLREIIGQDSFLISPGVGAQGGDPGETLRFADAIIVGRSIYLADNPAAAAAGIIESIKDLLNP.

Substrate is bound by residues aspartate 20, lysine 42, aspartate 70 to threonine 79, serine 127, proline 180 to glycine 190, glycine 202, and arginine 203. Lysine 72 (proton donor) is an active-site residue.

The protein belongs to the OMP decarboxylase family. Type 1 subfamily. In terms of assembly, homodimer.

It catalyses the reaction orotidine 5'-phosphate + H(+) = UMP + CO2. The protein operates within pyrimidine metabolism; UMP biosynthesis via de novo pathway; UMP from orotate: step 2/2. In terms of biological role, catalyzes the decarboxylation of orotidine 5'-monophosphate (OMP) to uridine 5'-monophosphate (UMP). This Methanothermobacter thermautotrophicus (strain ATCC 29096 / DSM 1053 / JCM 10044 / NBRC 100330 / Delta H) (Methanobacterium thermoautotrophicum) protein is Orotidine 5'-phosphate decarboxylase (pyrF).